A 303-amino-acid polypeptide reads, in one-letter code: Catechol 1,2-dioxygenase (303 aa).

Y156, Y191, H215, and H217 together coordinate Fe cation.

As to quaternary structure, homodimer. Requires Fe(3+) as cofactor.

It catalyses the reaction catechol + O2 = cis,cis-muconate + 2 H(+). The protein operates within aromatic compound metabolism; beta-ketoadipate pathway; 5-oxo-4,5-dihydro-2-furylacetate from catechol: step 1/3. Its activity is regulated as follows. Inhibited by Ag(+), Cu(+), Hg(2+) and Pb(2+). Can cleave 4-methylcatechol at lower rates than catechol, but has no activity with 3-methylcatechol, 4-chlorocatechol, 4-carboxycatechol or hydroxyquinol. The chain is Catechol 1,2-dioxygenase (HQD2) from Candida albicans (strain SC5314 / ATCC MYA-2876) (Yeast).